The primary structure comprises 652 residues: Putative glycine--tRNA ligase (652 aa).

The tract at residues 119-145 (GDKEARGQNSNDQPEESDDKKKRKKKV) is disordered. Position 221 (Glu-221) interacts with glycine. ATP contacts are provided by residues 253–255 (RNE) and 264–265 (RV). Glu-272 provides a ligand contact to glycine. 380–381 (EC) lines the ATP pocket. 499–501 (EPS) is a binding site for glycine. Residue Arg-506 coordinates ATP.

Belongs to the class-II aminoacyl-tRNA synthetase family. As to quaternary structure, homodimer.

The protein localises to the cytoplasm. The enzyme catalyses tRNA(Gly) + glycine + ATP = glycyl-tRNA(Gly) + AMP + diphosphate. It catalyses the reaction 2 ATP + H(+) = P(1),P(4)-bis(5'-adenosyl) tetraphosphate + diphosphate. In terms of biological role, catalyzes the ATP-dependent ligation of glycine to the 3'-end of its cognate tRNA, via the formation of an aminoacyl-adenylate intermediate (Gly-AMP). Also produces diadenosine tetraphosphate (Ap4A), a universal pleiotropic signaling molecule needed for cell regulation pathways, by direct condensation of 2 ATPs. Thereby, may play a special role in Ap4A homeostasis. This Schizosaccharomyces pombe (strain 972 / ATCC 24843) (Fission yeast) protein is Putative glycine--tRNA ligase (grs1).